Here is a 2457-residue protein sequence, read N- to C-terminus: Highly reducing polyketide synthase ACTTS3 (2457 aa).

The Ketosynthase family 3 (KS3) domain occupies 5–435; sequence REPIAVIGSA…GTNAHVILES (431 aa). Residues Cys-179, His-316, and His-356 each act as for beta-ketoacyl synthase activity in the active site. A malonyl-CoA:ACP transacylase (MAT) domain region spans residues 545–856; it reads RVLGIFTGQG…VMEAVLESSP (312 aa). Ser-641 functions as the For malonyltransferase activity in the catalytic mechanism. Residues 938–1078 form an N-terminal hotdog fold region; sequence HELLGRRTAD…GRIIIHLGSG (141 aa). The segment at 938–1244 is dehydratase (DH) domain; sequence HELLGRRTAD…LSLKSVAEPT (307 aa). Residues 938–1246 enclose the PKS/mFAS DH domain; the sequence is HELLGRRTAD…LKSVAEPTEE (309 aa). His-970 serves as the catalytic Proton acceptor; for dehydratase activity. The segment at 1091–1246 is C-terminal hotdog fold; it reads TDLSPVDLDR…LKSVAEPTEE (156 aa). The active-site Proton donor; for dehydratase activity is the Asp-1152. The tract at residues 1399–1587 is methyltransferase (CMet) domain; sequence ETMNNCIARA…DVFYDFPDRS (189 aa). The tract at residues 2085–2281 is ketoreductase (KR) domain; sequence FLPDKTYLMI…SDRHIENHLR (197 aa). In terms of domain architecture, Carrier spans 2374–2451; sequence DVTTVFQQAF…EISIDATKKY (78 aa). Ser-2411 carries the O-(pantetheine 4'-phosphoryl)serine modification.

Pantetheine 4'-phosphate serves as cofactor.

Its pathway is mycotoxin biosynthesis. Its function is as follows. Highly reducing polyketide synthase; part of the gene clusters that mediate the biosynthesis of the host-selective toxins (HSTs) ACT-toxins responsible for brown spot of tangerine disease by the tangerine pathotype which affects tangerines and mandarins. ACT-toxins consist of three moieties, 9,10-epoxy-8-hydroxy-9-methyl-decatrienoic acid (EDA), valine and a polyketide. ACT-toxin I is toxic to both citrus and pear; toxin II the 5''-deoxy derivative of ACT-toxin I, is highly toxic to pear and slightly toxic to citrus. On cellular level, ACT-toxins affect plasma membrane of susceptible cells and cause a sudden increase in loss of K(+) after a few minutes of toxin treatment. The acyl-CoA ligase ACTT1, the hydrolase ACTT2, the enoyl-CoA hydratases ACTT3 and ACTT6, and the acyl-CoA synthetase ACTT5 are all involved in the biosynthesis of the AK-, AF- and ACT-toxin common 9,10-epoxy-8-hydroxy-9-methyl-decatrienoic acid (EDA) structural moiety. The exact role of each enzyme, and of additional enzymes identified within the AF-toxin clusters have still to be determined. On the other hand, ACTTS1 to ACTTS4 are specific to the tangerine pathotype. The function of ACTTS3 is to elongate the polyketide chain portion of ACT-toxin that is unique to this toxin. The enoyl-reductase ACTTS2 might complement the missing enoyl-reductase (ER) domain in ACTTS3 in the synthesis of the polyketide portion of ACT-toxin. The roles of the nonribosomal peptide synthetases-related proteins ACTTS1 and ACTTS4 have also still not been elucidated. This chain is Highly reducing polyketide synthase ACTTS3, found in Alternaria alternata (Alternaria rot fungus).